Consider the following 89-residue polypeptide: Small ribosomal subunit protein uS15 (89 aa).

This sequence belongs to the universal ribosomal protein uS15 family. As to quaternary structure, part of the 30S ribosomal subunit. Forms a bridge to the 50S subunit in the 70S ribosome, contacting the 23S rRNA.

In terms of biological role, one of the primary rRNA binding proteins, it binds directly to 16S rRNA where it helps nucleate assembly of the platform of the 30S subunit by binding and bridging several RNA helices of the 16S rRNA. Functionally, forms an intersubunit bridge (bridge B4) with the 23S rRNA of the 50S subunit in the ribosome. This Corynebacterium kroppenstedtii (strain DSM 44385 / JCM 11950 / CIP 105744 / CCUG 35717) protein is Small ribosomal subunit protein uS15.